The primary structure comprises 840 residues: Phosphatidylglycerol lysyltransferase (840 aa).

The Cytoplasmic segment spans residues M1–K8. The helical transmembrane segment at L9–L29 threads the bilayer. Over Y30 to W52 the chain is Extracellular. The chain crosses the membrane as a helical span at residues L53 to I73. Residues L74–R89 are Cytoplasmic-facing. A helical transmembrane segment spans residues V90 to G110. Residues V111–Y129 are Extracellular-facing. The chain crosses the membrane as a helical span at residues I130–L150. The Cytoplasmic segment spans residues R151 to E161. The chain crosses the membrane as a helical span at residues I162–Y182. Residues T183–T200 are Extracellular-facing. The helical transmembrane segment at V201–V221 threads the bilayer. The Cytoplasmic portion of the chain corresponds to D222–T229. A helical transmembrane segment spans residues F230–F250. Residues G251–K270 are Extracellular-facing. A helical transmembrane segment spans residues I271 to L291. Over I292–S337 the chain is Cytoplasmic. The helical transmembrane segment at L338–Y358 threads the bilayer. Residues D359 to H366 lie on the Extracellular side of the membrane. Residues F367–V387 traverse the membrane as a helical segment. The Cytoplasmic segment spans residues R388–K392. A helical transmembrane segment spans residues G393–I413. The Extracellular segment spans residues Y414–T415. The helical transmembrane segment at Y416–Y436 threads the bilayer. The Cytoplasmic segment spans residues Q437–K450. The chain crosses the membrane as a helical span at residues L451–G471. The Extracellular segment spans residues T472–R489. A helical transmembrane segment spans residues Y490–F510. The Cytoplasmic portion of the chain corresponds to D511–K840.

The protein belongs to the LPG synthase family.

It localises to the cell membrane. The catalysed reaction is L-lysyl-tRNA(Lys) + a 1,2-diacyl-sn-glycero-3-phospho-(1'-sn-glycerol) = a 1,2-diacyl-sn-glycero-3-phospho-1'-(3'-O-L-lysyl)-sn-glycerol + tRNA(Lys). Its function is as follows. Catalyzes the transfer of a lysyl group from L-lysyl-tRNA(Lys) to membrane-bound phosphatidylglycerol (PG), which produces lysylphosphatidylglycerol (LPG), a major component of the bacterial membrane with a positive net charge. LPG synthesis contributes to bacterial virulence as it is involved in the resistance mechanism against cationic antimicrobial peptides (CAMP) produces by the host's immune system (defensins, cathelicidins) and by the competing microorganisms (bacteriocins). In fact, the modification of anionic phosphatidylglycerol with positively charged L-lysine results in repulsion of the peptides. The polypeptide is Phosphatidylglycerol lysyltransferase (mprF) (Staphylococcus epidermidis (strain ATCC 12228 / FDA PCI 1200)).